A 168-amino-acid polypeptide reads, in one-letter code: 2-C-methyl-D-erythritol 2,4-cyclodiphosphate synthase (168 aa).

Residues Asp11 and His13 each coordinate a divalent metal cation. 4-CDP-2-C-methyl-D-erythritol 2-phosphate-binding positions include Asp11–His13 and His41–Ser42. Position 49 (His49) interacts with a divalent metal cation. Residues Asp63 to Gly65, Phe68 to Asp72, Thr139 to Glu142, Phe146, and Arg149 contribute to the 4-CDP-2-C-methyl-D-erythritol 2-phosphate site.

Belongs to the IspF family. As to quaternary structure, homotrimer. It depends on a divalent metal cation as a cofactor.

It carries out the reaction 4-CDP-2-C-methyl-D-erythritol 2-phosphate = 2-C-methyl-D-erythritol 2,4-cyclic diphosphate + CMP. It functions in the pathway isoprenoid biosynthesis; isopentenyl diphosphate biosynthesis via DXP pathway; isopentenyl diphosphate from 1-deoxy-D-xylulose 5-phosphate: step 4/6. Functionally, involved in the biosynthesis of isopentenyl diphosphate (IPP) and dimethylallyl diphosphate (DMAPP), two major building blocks of isoprenoid compounds. Catalyzes the conversion of 4-diphosphocytidyl-2-C-methyl-D-erythritol 2-phosphate (CDP-ME2P) to 2-C-methyl-D-erythritol 2,4-cyclodiphosphate (ME-CPP) with a corresponding release of cytidine 5-monophosphate (CMP). The polypeptide is 2-C-methyl-D-erythritol 2,4-cyclodiphosphate synthase (Psychrobacter cryohalolentis (strain ATCC BAA-1226 / DSM 17306 / VKM B-2378 / K5)).